The primary structure comprises 442 residues: Endothelin receptor type B (442 aa).

A signal peptide spans 1–26; it reads MQSSASRCGRALVALLLACGLLGVWG. The Extracellular portion of the chain corresponds to 27 to 101; that stretch reads EKRGFPPAQA…RKIEINKTFK (75 aa). N-linked (GlcNAc...) asparagine glycosylation is found at Asn-60 and Asn-97. The helical transmembrane segment at 102-126 threads the bilayer; the sequence is YINTIVSCLVFVLGIIGNSTLLRII. Residues 127–137 are Cytoplasmic-facing; that stretch reads YKNKCMRNGPN. Residues 138–163 form a helical membrane-spanning segment; that stretch reads ILIASLALGDLLHIIIDIPINAYKLL. Residues 164-175 lie on the Extracellular side of the membrane; it reads AGDWPFGAEMCK. Cys-174 and Cys-255 are oxidised to a cystine. The helical transmembrane segment at 176-197 threads the bilayer; the sequence is LVPFIQKASVGITVLSLCALSI. Residues 198–218 lie on the Cytoplasmic side of the membrane; sequence DRYRAVASWSRIKGIGVPKWT. A helical membrane pass occupies residues 219–243; it reads AVEIVLIWVVSVVLAVPEAIGFDVI. Over 244-271 the chain is Extracellular; the sequence is TSDYKGKPLRVCMLNPFQKTAFMQFYKT. A helical transmembrane segment spans residues 272–296; sequence AKDWWLFSFYFCLPLAITAIFYTLM. Topologically, residues 297 to 324 are cytoplasmic; that stretch reads TCEMLRKKSGMQIALNDHLKQRREVAKT. Ser-305 bears the Phosphoserine mark. The chain crosses the membrane as a helical span at residues 325–350; it reads VFCLVLVFALCWLPLHLSRILKLTLY. The Extracellular segment spans residues 351-362; the sequence is DQSNPQRCELLS. The helical transmembrane segment at 363 to 389 threads the bilayer; the sequence is FLLVLDYIGINMASLNSCINPIALYLV. Topologically, residues 390–442 are cytoplasmic; that stretch reads SKRFKNCFKSCLCCWCQTFEEKQSLEEKQSCLKFKANDHGYDNFRSSNKYSSS. S-palmitoyl cysteine attachment occurs at residues Cys-402, Cys-403, and Cys-405. Position 419 is a phosphoserine (Ser-419). Tyr-439 bears the Phosphotyrosine mark. 3 positions are modified to phosphoserine: Ser-440, Ser-441, and Ser-442.

It belongs to the G-protein coupled receptor 1 family. Endothelin receptor subfamily. EDNRB sub-subfamily. In terms of tissue distribution, widely distributed in cell types of a variety of tissues.

The protein localises to the cell membrane. Functionally, non-specific receptor for endothelin 1, 2, and 3. Mediates its action by association with G proteins that activate a phosphatidylinositol-calcium second messenger system. The protein is Endothelin receptor type B of Rattus norvegicus (Rat).